The following is a 185-amino-acid chain: NEDD8-conjugating enzyme UBE2F (185 aa).

Residues 1 to 29 are interaction with UBA3; sequence MLTLASKLKRDDGVRGPRASNPASDSTRR. A disordered region spans residues 11–30; that stretch reads DDGVRGPRASNPASDSTRRV. In terms of domain architecture, UBC core spans 32–185; sequence VRDKLLVKEV…VEDYIKRYAR (154 aa). Residue Cys-116 is the Glycyl thioester intermediate of the active site.

Belongs to the ubiquitin-conjugating enzyme family. UBE2F subfamily.

It carries out the reaction [E1 NEDD8-activating enzyme]-S-[NEDD8 protein]-yl-L-cysteine + [E2 NEDD8-conjugating enzyme]-L-cysteine = [E1 NEDD8-activating enzyme]-L-cysteine + [E2 NEDD8-conjugating enzyme]-S-[NEDD8-protein]-yl-L-cysteine.. It functions in the pathway protein modification; protein neddylation. In terms of biological role, accepts the ubiquitin-like protein NEDD8 from the UBA3-NAE1 E1 complex and catalyzes its covalent attachment to other proteins. Together with the E3 ubiquitin ligase RNF7/RBX2, specifically neddylates cullin-5 (CUL5). Does not neddylate CUL1, CUL2, CUL3, CUL4A or CUL4B. This Gallus gallus (Chicken) protein is NEDD8-conjugating enzyme UBE2F (UBE2F).